We begin with the raw amino-acid sequence, 264 residues long: Thymidylate synthase (264 aa).

Arg21 contacts dUMP. His51 provides a ligand contact to (6R)-5,10-methylene-5,6,7,8-tetrahydrofolate. Position 126-127 (Arg126–Arg127) interacts with dUMP. Cys146 (nucleophile) is an active-site residue. DUMP contacts are provided by residues Arg166 to Asp169, Asn177, and His207 to Tyr209. Asp169 is a (6R)-5,10-methylene-5,6,7,8-tetrahydrofolate binding site. Ala263 is a (6R)-5,10-methylene-5,6,7,8-tetrahydrofolate binding site.

This sequence belongs to the thymidylate synthase family. Bacterial-type ThyA subfamily. Homodimer.

Its subcellular location is the cytoplasm. It catalyses the reaction dUMP + (6R)-5,10-methylene-5,6,7,8-tetrahydrofolate = 7,8-dihydrofolate + dTMP. It functions in the pathway pyrimidine metabolism; dTTP biosynthesis. Catalyzes the reductive methylation of 2'-deoxyuridine-5'-monophosphate (dUMP) to 2'-deoxythymidine-5'-monophosphate (dTMP) while utilizing 5,10-methylenetetrahydrofolate (mTHF) as the methyl donor and reductant in the reaction, yielding dihydrofolate (DHF) as a by-product. This enzymatic reaction provides an intracellular de novo source of dTMP, an essential precursor for DNA biosynthesis. This Escherichia fergusonii (strain ATCC 35469 / DSM 13698 / CCUG 18766 / IAM 14443 / JCM 21226 / LMG 7866 / NBRC 102419 / NCTC 12128 / CDC 0568-73) protein is Thymidylate synthase.